Reading from the N-terminus, the 146-residue chain is Cyanate hydratase (146 aa).

Residues Arg87, Glu90, and Ser113 contribute to the active site.

Belongs to the cyanase family.

The enzyme catalyses cyanate + hydrogencarbonate + 3 H(+) = NH4(+) + 2 CO2. Its function is as follows. Catalyzes the reaction of cyanate with bicarbonate to produce ammonia and carbon dioxide. In Synechococcus elongatus (strain ATCC 33912 / PCC 7942 / FACHB-805) (Anacystis nidulans R2), this protein is Cyanate hydratase.